The chain runs to 582 residues: NAB transcription cofactor mab-10 (582 aa).

The segment covering 1–70 (MSSSSSSSLP…SSSSQRQSTS (70 aa)) has biased composition (low complexity). Disordered stretches follow at residues 1–84 (MSSS…MPTP), 257–287 (SDQQ…PAGI), 333–365 (PPSS…SPFL), and 516–582 (SRKR…LPES). Residues 83–161 (TPTTLSEWQL…EYSQDQTAFN (79 aa)) form an NCD1 region. 2 stretches are compositionally biased toward low complexity: residues 257-276 (SDQQ…STSS) and 333-345 (PPSS…PSTS). Residues 396 to 519 (LSTAQISRLA…GYNYAKSRKR (124 aa)) are NCD2. Basic and acidic residues predominate over residues 573-582 (EKMKGELPES).

Belongs to the NAB family. In terms of assembly, interacts with transcription factor lin-29 (via C-terminus).

The protein resides in the nucleus. Functionally, transcriptional cofactor. Heterochronic protein, involved in timing of a subset of differentiation events during the larval-to-adult transition. Promotes hypodermal terminal differentiation, together with transcription factor lin-29, perhaps as part of a transcriptional complex. Involved in regulating molting by repressing the expression of nuclear hormone receptors nhr-23 and nhr-25 in the adult hypoderm, probably acting in concert with lin-29. The protein is NAB transcription cofactor mab-10 of Caenorhabditis elegans.